A 238-amino-acid chain; its full sequence is DnaA regulatory inactivator Hda (238 aa).

It belongs to the DnaA family. HdA subfamily. As to quaternary structure, the active form seems to be an ADP-bound monomer. Forms the RIDA complex (regulatory inactivation of DnaA) of ATP-DnaA, ADP-Hda and the DNA-loaded beta sliding clamp (dnaN).

In terms of biological role, mediates the interaction of DNA replication initiator protein DnaA with DNA polymerase subunit beta sliding clamp (dnaN). Stimulates hydrolysis of ATP-DnaA to ADP-DnaA, rendering DnaA inactive for reinitiation, a process called regulatory inhibition of DnaA or RIDA. This is DnaA regulatory inactivator Hda from Pectobacterium atrosepticum (strain SCRI 1043 / ATCC BAA-672) (Erwinia carotovora subsp. atroseptica).